The following is a 299-amino-acid chain: uncharacterized protein (299 aa).

This is an uncharacterized protein from Bacillus subtilis (strain 168).